Here is a 214-residue protein sequence, read N- to C-terminus: Dephospho-CoA kinase (214 aa).

The 200-residue stretch at 3–202 (KIGLTGGIGS…DRWLALAGAA (200 aa)) folds into the DPCK domain. 11–16 (GSGKSR) is a binding site for ATP.

Belongs to the CoaE family.

The protein localises to the cytoplasm. The catalysed reaction is 3'-dephospho-CoA + ATP = ADP + CoA + H(+). The protein operates within cofactor biosynthesis; coenzyme A biosynthesis; CoA from (R)-pantothenate: step 5/5. Catalyzes the phosphorylation of the 3'-hydroxyl group of dephosphocoenzyme A to form coenzyme A. This Bordetella pertussis (strain Tohama I / ATCC BAA-589 / NCTC 13251) protein is Dephospho-CoA kinase.